The sequence spans 241 residues: Small ribosomal subunit protein bS6 (241 aa).

Positions 97-108 (KPKIRERNRKYT) are enriched in basic residues. The disordered stretch occupies residues 97–241 (KPKIRERNRK…YNNKKPQSSN (145 aa)). The segment covering 109–118 (PRRDRFEKPN) has biased composition (basic and acidic residues). 2 stretches are compositionally biased toward low complexity: residues 130–151 (QDQQ…QTSQ) and 161–182 (DDFQ…NQSG). Residues 189–202 (RQNQENIHQNSKNH) show a composition bias toward polar residues.

Belongs to the bacterial ribosomal protein bS6 family.

Its function is as follows. Binds together with bS18 to 16S ribosomal RNA. This Mesomycoplasma hyopneumoniae (strain 232) (Mycoplasma hyopneumoniae) protein is Small ribosomal subunit protein bS6.